Consider the following 113-residue polypeptide: Nucleoid-associated protein SAV_4556 (113 aa).

This sequence belongs to the YbaB/EbfC family. As to quaternary structure, homodimer.

It localises to the cytoplasm. It is found in the nucleoid. In terms of biological role, binds to DNA and alters its conformation. May be involved in regulation of gene expression, nucleoid organization and DNA protection. The polypeptide is Nucleoid-associated protein SAV_4556 (Streptomyces avermitilis (strain ATCC 31267 / DSM 46492 / JCM 5070 / NBRC 14893 / NCIMB 12804 / NRRL 8165 / MA-4680)).